The sequence spans 597 residues: Elongation factor 4 (597 aa).

One can recognise a tr-type G domain in the interval 2-184; that stretch reads DHIRNFSIIA…ALIAKVPPPK (183 aa). Residues 14 to 19 and 131 to 134 each bind GTP; these read DHGKST and NKID.

This sequence belongs to the TRAFAC class translation factor GTPase superfamily. Classic translation factor GTPase family. LepA subfamily.

Its subcellular location is the cell inner membrane. It carries out the reaction GTP + H2O = GDP + phosphate + H(+). Functionally, required for accurate and efficient protein synthesis under certain stress conditions. May act as a fidelity factor of the translation reaction, by catalyzing a one-codon backward translocation of tRNAs on improperly translocated ribosomes. Back-translocation proceeds from a post-translocation (POST) complex to a pre-translocation (PRE) complex, thus giving elongation factor G a second chance to translocate the tRNAs correctly. Binds to ribosomes in a GTP-dependent manner. The protein is Elongation factor 4 of Burkholderia vietnamiensis (strain G4 / LMG 22486) (Burkholderia cepacia (strain R1808)).